Here is a 276-residue protein sequence, read N- to C-terminus: Formamidopyrimidine-DNA glycosylase (276 aa).

The Schiff-base intermediate with DNA role is filled by P2. Catalysis depends on E3, which acts as the Proton donor. K58 serves as the catalytic Proton donor; for beta-elimination activity. Positions 92, 111, and 154 each coordinate DNA. An FPG-type zinc finger spans residues 239 to 273 (QVYGHAGEECSSCGTILEKIKVNGRGTTFCPHCQV). Residue R263 is the Proton donor; for delta-elimination activity of the active site.

Belongs to the FPG family. In terms of assembly, monomer. Requires Zn(2+) as cofactor.

It carries out the reaction Hydrolysis of DNA containing ring-opened 7-methylguanine residues, releasing 2,6-diamino-4-hydroxy-5-(N-methyl)formamidopyrimidine.. It catalyses the reaction 2'-deoxyribonucleotide-(2'-deoxyribose 5'-phosphate)-2'-deoxyribonucleotide-DNA = a 3'-end 2'-deoxyribonucleotide-(2,3-dehydro-2,3-deoxyribose 5'-phosphate)-DNA + a 5'-end 5'-phospho-2'-deoxyribonucleoside-DNA + H(+). Functionally, involved in base excision repair of DNA damaged by oxidation or by mutagenic agents. Acts as a DNA glycosylase that recognizes and removes damaged bases. Has a preference for oxidized purines, such as 7,8-dihydro-8-oxoguanine (8-oxoG). Has AP (apurinic/apyrimidinic) lyase activity and introduces nicks in the DNA strand. Cleaves the DNA backbone by beta-delta elimination to generate a single-strand break at the site of the removed base with both 3'- and 5'-phosphates. This Lactobacillus gasseri (strain ATCC 33323 / DSM 20243 / BCRC 14619 / CIP 102991 / JCM 1131 / KCTC 3163 / NCIMB 11718 / NCTC 13722 / AM63) protein is Formamidopyrimidine-DNA glycosylase.